The primary structure comprises 42 residues: Histone H1B (42 aa).

Residues 1–42 (TYYELIKAAILALKERNGSSAQAIKKYILENNKIEFQQTFLR) form the H15 domain.

This sequence belongs to the histone H1/H5 family.

It is found in the nucleus. Its subcellular location is the chromosome. Histones H1 are necessary for the condensation of nucleosome chains into higher-order structures. The protein is Histone H1B of Olisthodiscus luteus (Marine phytoflagellate).